The primary structure comprises 196 residues: Secreted effector protein SseB (196 aa).

The protein belongs to the EspA/SseB family. As to quaternary structure, may form a complex with SseC and SseD. Binds to the chaperone SseA.

The protein resides in the secreted. Its subcellular location is the cell surface. Effector proteins function to alter host cell physiology and promote bacterial survival in host tissues. May act as a translocator that mediates translocation of SPI-2 T3SS effector proteins from intraphagosomal bacterial cells into the host cells. SseB is required for correct localization of SseC and SseD on the bacterial cell surface. The chain is Secreted effector protein SseB (sseB) from Salmonella typhimurium (strain LT2 / SGSC1412 / ATCC 700720).